The chain runs to 309 residues: Large ribosomal subunit protein mL45 (309 aa).

It belongs to the mitochondrion-specific ribosomal protein mL45 family. Component of the mitochondrial ribosome large subunit (39S) which comprises a 16S rRNA and about 50 distinct proteins.

It localises to the mitochondrion. Its function is as follows. Component of the mitochondrial large ribosomal subunit (mt-LSU). Within the mitochondrial ribosomes, required to direct the nascent polypeptide toward the tunnel exit and position the exit at a distance from the membrane surface. This is Large ribosomal subunit protein mL45 (mrpl45) from Xenopus tropicalis (Western clawed frog).